The following is a 414-amino-acid chain: Probable uracil permease (414 aa).

Topologically, residues 1–14 (MTNQIPPSLAENQS) are cytoplasmic. A helical membrane pass occupies residues 15–38 (KLKQSFVGLQMLFVAFGALVLVPL). The Periplasmic portion of the chain corresponds to 39–42 (ITGL). The helical transmembrane segment at 43–62 (DSNTALLTAGVGTLLFQFCT) threads the bilayer. Residues 63 to 65 (GKQ) are Cytoplasmic-facing. A discontinuously helical transmembrane segment spans residues 66–82 (VPIFLASSFAFIAPIQY). Phe74 lines the uracil pocket. Residues 83–91 (GVQTWGIAT) lie on the Periplasmic side of the membrane. Residues 92–112 (TMGGLAFTGLVYFALSTLVKL) form a helical membrane-spanning segment. Topologically, residues 113–124 (RGAEALQRFFPP) are cytoplasmic. Residues 125 to 146 (VVVGPVIIIIGMGLAPIAVDMS) traverse the membrane as a helical segment. At 147 to 155 (LGKNSAYAY) the chain is on the periplasmic side. Residues 156-171 (NDAVLVSMVTLLTTLS) form a helical membrane-spanning segment. At 172–178 (VAVFAKG) the chain is on the cytoplasmic side. The helical transmembrane segment at 179 to 199 (LMKLIPIMFGITAGYILCLFL) threads the bilayer. Residues 200–224 (GLINFQPVIDAPWFSLPKLTTPEFN) lie on the Periplasmic side of the membrane. Residues 225–248 (LEAILYMLPIAIAPAVEHVGGIMA) form a helical membrane-spanning segment. Glu241 is a binding site for uracil. Residues 249–261 (ISSVTGKDFLKKP) are Cytoplasmic-facing. Residues 262-281 (GLHRTLLGDGIATAAASLVG) form a helical membrane-spanning segment. The chain crosses the membrane as a discontinuously helical span at residues 282–298 (GPPNTTYAEVTGAVMLT). Residue Glu290 coordinates uracil. The Cytoplasmic portion of the chain corresponds to 299 to 301 (RNF). Residues 302–319 (NPNIMTWAAVWAIAISFC) traverse the membrane as a helical segment. Residues 320–332 (GKVGAFLSTIPTI) are Periplasmic-facing. The chain crosses the membrane as a helical span at residues 333–354 (VMGGIMMLVFGSIAVVGMSTLI). Residues 355 to 365 (RGKVDVTEARN) lie on the Cytoplasmic side of the membrane. Residues 366–401 (LCIISVVMTFGIGNMFVDVGNVSLKGISLCAIVAII) constitute an intramembrane region (discontinuously helical). Topologically, residues 402-414 (LNLVLPKAKNEVE) are cytoplasmic.

It belongs to the nucleobase:cation symporter-2 (NCS2) (TC 2.A.40) family.

It localises to the cell inner membrane. It catalyses the reaction uracil(in) + H(+)(in) = uracil(out) + H(+)(out). Functionally, transport of uracil in the cell. In Haemophilus influenzae (strain ATCC 51907 / DSM 11121 / KW20 / Rd), this protein is Probable uracil permease (uraA).